Here is a 542-residue protein sequence, read N- to C-terminus: GMP synthase [glutamine-hydrolyzing] (542 aa).

The 191-residue stretch at 28-218 (MLVILDFGSQ…VYHICQCEPT (191 aa)) folds into the Glutamine amidotransferase type-1 domain. Cys105 serves as the catalytic Nucleophile. Catalysis depends on residues His192 and Glu194. The region spanning 219–417 (WTTEAFVEES…IGLPEEIVRR (199 aa)) is the GMPS ATP-PPase domain. 246–252 (SGGVDSS) contacts ATP.

Homodimer.

It carries out the reaction XMP + L-glutamine + ATP + H2O = GMP + L-glutamate + AMP + diphosphate + 2 H(+). The protein operates within purine metabolism; GMP biosynthesis; GMP from XMP (L-Gln route): step 1/1. Functionally, catalyzes the synthesis of GMP from XMP. This is GMP synthase [glutamine-hydrolyzing] from Rippkaea orientalis (strain PCC 8801 / RF-1) (Cyanothece sp. (strain PCC 8801)).